Here is a 266-residue protein sequence, read N- to C-terminus: Ribonuclease 3 (266 aa).

Residues 34–158 (IERCQEILGY…VIAALYIDGG (125 aa)) enclose the RNase III domain. Glutamate 72 is a binding site for Mg(2+). The active site involves aspartate 76. Aspartate 144 and glutamate 147 together coordinate Mg(2+). Residue glutamate 147 is part of the active site. The 70-residue stretch at 185–254 (NHKSVLQQFA…AANALAELHN (70 aa)) folds into the DRBM domain.

This sequence belongs to the ribonuclease III family. Homodimer. Mg(2+) is required as a cofactor.

It is found in the cytoplasm. It catalyses the reaction Endonucleolytic cleavage to 5'-phosphomonoester.. Its function is as follows. Digests double-stranded RNA. Involved in the processing of primary rRNA transcript to yield the immediate precursors to the large and small rRNAs (23S and 16S). Processes some mRNAs, and tRNAs when they are encoded in the rRNA operon. Processes pre-crRNA and tracrRNA of type II CRISPR loci if present in the organism. The polypeptide is Ribonuclease 3 (Rhodopirellula baltica (strain DSM 10527 / NCIMB 13988 / SH1)).